The primary structure comprises 429 residues: MGLSTAYSPVGSHLAPAPLGHRRSAQLHRPRRALLATVRCSVDAAKQVQDGVATAEAPATRKDCFGVFCTTYDLKAEDKTKSWKKLVNIAVSGAAGMISNHLLFKLASGEVFGQDQPIALKLLGSERSFQALEGVAMELEDSLYPLLREVSIGIDPYEVFEDVDWALLIGAKPRGPGMERAALLDINGQIFADQGKALNAVASKNVKVLVVGNPCNTNALICLKNAPDIPAKNFHALTRLDENRAKCQLALKAGVFYDKVSNVTIWGNHSTTQVPDFLNAKIDGRPVKEVIKDTKWLEEEFTITVQKRGGALIQKWGRSSAASTAVSIADAIKSLVTPTPEGDWFSTGVYTTGNPYGIAEDIVFSMPCRSKGDGDYELATDVSMDDFLWERIKKSEAELLAEKKCVAHLTGEGNAYCDVPEDTMLPGEV.

The N-terminal 40 residues, 1 to 40 (MGLSTAYSPVGSHLAPAPLGHRRSAQLHRPRRALLATVRC), are a transit peptide targeting the chloroplast. Cys64 and Cys69 are oxidised to a cystine. 93–99 (GAAGMIS) is a binding site for NADP(+). Substrate-binding residues include Arg174 and Arg180. NADP(+)-binding positions include Asn187, Gln194, and 211–213 (VGN). Residues Asn213 and Arg244 each coordinate substrate. His269 serves as the catalytic Proton acceptor. A disulfide bridge links Cys405 with Cys417.

It belongs to the LDH/MDH superfamily. MDH type 2 family. Homodimer.

It is found in the plastid. The protein localises to the chloroplast. It catalyses the reaction (S)-malate + NADP(+) = oxaloacetate + NADPH + H(+). Its activity is regulated as follows. Chloroplast NADP-MDH is activated upon illumination. In order to be enzymatically active, disulfide bridges on the protein must be reduced by thioredoxin which receives electrons from ferredoxin and the electron transport system of photosynthesis. The chloroplastic, NADP-dependent form is essential for the photosynthesis C4 cycle, which allows plants to circumvent the problem of photorespiration. In C4 plants, NADP-MDH activity acts to convert oxaloacetate to malate in chloroplasts of mesophyll cells for transport to the bundle sheath cells. The chain is Malate dehydrogenase [NADP] 1, chloroplastic from Sorghum bicolor (Sorghum).